The sequence spans 62 residues: Sperm protamine P1 (62 aa).

The segment at 1–62 (MARCRRHSRS…RYSRRGRRRY (62 aa)) is disordered.

Belongs to the protamine P1 family. Testis.

It localises to the nucleus. Its subcellular location is the chromosome. In terms of biological role, protamines substitute for histones in the chromatin of sperm during the haploid phase of spermatogenesis. They compact sperm DNA into a highly condensed, stable and inactive complex. The protein is Sperm protamine P1 (PRM1) of Planigale maculata sinualis (Common planigale).